The primary structure comprises 155 residues: MMRGASKRSISSAAVLLIKKNKLPPRPKFTPEMEAQCTEKFLHGGRGPGGQKINKCNSKVQLRHEPTGIVVECQETRSREQNRKLARLKLARELAASYDTMPSREEALLQWHRQQKRSQRRRSVAKYEQREEAARVEKEEREARDREMVRELFRR.

Residues 1–17 (MMRGASKRSISSAAVLL) constitute a mitochondrion transit peptide. The disordered stretch occupies residues 111–155 (WHRQQKRSQRRRSVAKYEQREEAARVEKEEREARDREMVRELFRR). Residues 113–124 (RQQKRSQRRRSV) show a composition bias toward basic residues. Over residues 125–155 (AKYEQREEAARVEKEEREARDREMVRELFRR) the composition is skewed to basic and acidic residues.

This sequence belongs to the prokaryotic/mitochondrial release factor family.

It is found in the mitochondrion. This is an uncharacterized protein from Saccharomyces cerevisiae (strain ATCC 204508 / S288c) (Baker's yeast).